The chain runs to 225 residues: Small ribosomal subunit protein eS1 (225 aa).

Over residues 206 to 216 the composition is skewed to acidic residues; sequence PVEEPAAEEVA. The tract at residues 206 to 225 is disordered; that stretch reads PVEEPAAEEVAEAPAAETQE.

This sequence belongs to the eukaryotic ribosomal protein eS1 family.

This chain is Small ribosomal subunit protein eS1, found in Methanococcus maripaludis (strain C5 / ATCC BAA-1333).